Consider the following 813-residue polypeptide: Enhancer of polycomb homolog 1 (813 aa).

3 disordered regions span residues 310–403 (FKHQ…PFAF), 484–513 (MLSS…SKDL), and 528–577 (FRPR…SSGS). Over residues 311-333 (KHQDATDSKEFKVNKQDKADLIR) the composition is skewed to basic and acidic residues. Residue Lys319 forms a Glycyl lysine isopeptide (Lys-Gly) (interchain with G-Cter in SUMO2) linkage. A compositionally biased stretch (low complexity) spans 346-361 (PPSAAAPQQQSPAALP). Over residues 486 to 513 (SSPQPSPVNQFANTSEPNTSDRSSSKDL) the composition is skewed to polar residues. Ser538 is modified (phosphoserine). A compositionally biased stretch (low complexity) spans 564-577 (TCSTSTQNRSSSGS). A Glycyl lysine isopeptide (Lys-Gly) (interchain with G-Cter in SUMO2) cross-link involves residue Lys650. The segment at 779-813 (VPSSSSVDSVPRENHESEKPALNNIADNTVAMEVT) is disordered. Basic and acidic residues predominate over residues 788-797 (VPRENHESEK).

Belongs to the enhancer of polycomb family. As to quaternary structure, component of the NuA4 histone acetyltransferase complex which contains the catalytic subunit KAT5/TIP60 and the subunits EP400, TRRAP/PAF400, BRD8/SMAP, EPC1, DMAP1/DNMAP1, RUVBL1/TIP49, RUVBL2, ING3, actin, ACTL6A/BAF53A, MORF4L1/MRG15, MORF4L2/MRGX, MRGBP, YEATS4/GAS41, VPS72/YL1 and MEAF6. KAT5/TIP60, EPC1, and ING3 together constitute a minimal HAT complex termed Piccolo NuA4. Component of a NuA4-related complex which contains EP400, TRRAP/PAF400, SRCAP, BRD8/SMAP, EPC1, DMAP1/DNMAP1, RUVBL1/TIP49, RUVBL2, actin, ACTL6A/BAF53A, VPS72 and YEATS4/GAS41. Interacts with TRIM27. Interacts with MBTD1; interaction is direct and promotes recruitment of MBTD1 into the NuA4 histone acetyltransferase complex. In terms of tissue distribution, expressed in adult brain, heart, kidney, liver, lung, skeletal muscle and testis. Expressed in male germ cells, present in round spermatids of steps 1 to 4.

It is found in the nucleus. Its subcellular location is the cytoplasm. Component of the NuA4 histone acetyltransferase (HAT) complex, a multiprotein complex involved in transcriptional activation of select genes principally by acetylation of nucleosomal histones H4 and H2A. The NuA4 complex plays a direct role in repair of DNA double-strand breaks (DSBs) by promoting homologous recombination (HR). The NuA4 complex is also required for spermatid development by promoting acetylation of histones: histone acetylation is required for histone replacement during the transition from round to elongating spermatids. In the NuA4 complex, EPC1 is required to recruit MBTD1 into the complex. This chain is Enhancer of polycomb homolog 1, found in Mus musculus (Mouse).